We begin with the raw amino-acid sequence, 181 residues long: Probable inactive acireductone dioxygenase 2 (181 aa).

It belongs to the acireductone dioxygenase (ARD) family.

It localises to the cytoplasm. The protein localises to the nucleus. Functionally, probable inactive acireductone dioxygenase. The chain is Probable inactive acireductone dioxygenase 2 from Sorghum bicolor (Sorghum).